We begin with the raw amino-acid sequence, 632 residues long: Epithelial sodium channel subunit alpha (632 aa).

Residues 1–49 (MTKEEKNEKEALIEFFSSYRELFEFFCSNTTIHGAIRLVCSRRNRMKTA) lie on the Cytoplasmic side of the membrane. A helical membrane pass occupies residues 50–70 (FWLVLFLVTFGLMYWQFGLLF). Over 71–520 (GQYFSYPVSI…SQWSLWFGSS (450 aa)) the chain is Extracellular. Intrachain disulfides connect C97/C264, C189/C196, C241/C248, C355/C440, C377/C417, C377/C436, C381/C432, C390/C417, C390/C440, and C392/C406. The chain crosses the membrane as a helical span at residues 521-541 (VLSVVEMLELVIDFVIIGVMI). Over 542-632 (LLHRYYYKKA…YYEENGGRRN (91 aa)) the chain is Cytoplasmic. Residues 612 to 622 (SRSSSMRSNRS) are compositionally biased toward low complexity. Residues 612–632 (SRSSSMRSNRSYYEENGGRRN) are disordered. Positions 623 to 632 (YYEENGGRRN) are enriched in basic and acidic residues.

It belongs to the amiloride-sensitive sodium channel (TC 1.A.6) family. SCNN1A subfamily. As to quaternary structure, heterotrimer; containing an alpha/SCNN1A, a beta/SCNN1B and a gamma/SCNN1G subunit. Interacts with shroom1.

The protein localises to the apical cell membrane. The protein resides in the cell projection. Its subcellular location is the cilium. It is found in the cytoplasmic granule. It localises to the cytoplasm. The protein localises to the cytoplasmic vesicle. The protein resides in the secretory vesicle. Its subcellular location is the acrosome. It is found in the flagellum. It catalyses the reaction Na(+)(in) = Na(+)(out). Its activity is regulated as follows. Originally identified and characterized by its inhibition by the diuretic drug amiloride. Functionally, this is one of the three pore-forming subunits of the heterotrimeric epithelial sodium channel (ENaC), a critical regulator of sodium balance and fluid homeostasis. ENaC operates in epithelial tissues, where it mediates the electrodiffusion of sodium ions from extracellular fluid through the apical membrane of cells, with water following osmotically. It plays a key role in maintaining sodium homeostasis through electrogenic sodium reabsorption in the kidneys. This chain is Epithelial sodium channel subunit alpha, found in Xenopus laevis (African clawed frog).